The chain runs to 245 residues: Large ribosomal subunit protein uL4 (245 aa).

The segment covering 1–13 (MSRVATSDPSVTA) has biased composition (polar residues). Disordered regions lie at residues 1 to 28 (MSRV…EGGS), 56 to 114 (ARQG…QRTP), and 224 to 245 (TSTA…EENK). A compositionally biased stretch (basic and acidic residues) spans 59 to 71 (GTHDTKTRGEVRG). Residues 72–83 (GGRKPYRQKGTG) show a composition bias toward basic residues.

Belongs to the universal ribosomal protein uL4 family. Part of the 50S ribosomal subunit.

One of the primary rRNA binding proteins, this protein initially binds near the 5'-end of the 23S rRNA. It is important during the early stages of 50S assembly. It makes multiple contacts with different domains of the 23S rRNA in the assembled 50S subunit and ribosome. In terms of biological role, forms part of the polypeptide exit tunnel. This chain is Large ribosomal subunit protein uL4, found in Frankia casuarinae (strain DSM 45818 / CECT 9043 / HFP020203 / CcI3).